The sequence spans 540 residues: Flavin-dependent halogenase ptaM (540 aa).

Positions 1-21 (MSVPAQTSVLIVGGGPAGSYA) are cleaved as a signal peptide. The FAD site is built by Gly-14, Ala-17, and Glu-47. 4 N-linked (GlcNAc...) asparagine glycosylation sites follow: Asn-159, Asn-192, Asn-204, and Asn-243. Chloride-binding residues include Ser-330 and Gly-331. N-linked (GlcNAc...) asparagine glycosylation is found at Asn-480, Asn-491, and Asn-523.

It belongs to the flavin-dependent halogenase family.

The protein operates within secondary metabolite biosynthesis. Flavin-dependent halogenase; part of the gene cluster that mediates the biosynthesis of pestheic acid, a diphenyl ether which is a biosynthetic precursor of the unique chloropupukeananes. The biosynthesis initiates from condensation of acetate and malonate units catalyzed by the non-reducing PKS ptaA. As the ptaA protein is TE/CLC domain-deficient, hydrolysis and Claisen cyclization of the polyketide could be catalyzed by ptaB containing a beta-lactamase domain. The ptaB protein might hydrolyze the thioester bond between the ACP of ptaA and the intermediate to release atrochrysone carboxylic acid, which is spontaneously dehydrated to form endocrocin anthrone. Endocrocin anthrone is then converted to endocrocin, catalyzed by the anthrone oxygenase ptaC. Spontaneous decarboxylation of endocrocin occurs to generate emodin. An O-methyltransferase (ptaH or ptaI) could methylate emodin to form physcion. PtaJ could then catalyze the oxidative cleavage of physcion, and rotation of the intermediate could then afford desmethylisosulochrin. PtaF, a putative NADH-dependent oxidoreductase, might also participate in the oxidative cleavage step. Desmethylisosulochrin is then transformed by another O-methyltransferase (ptaH or ptaI) to form isosulochrin. Chlorination of isosulochrin by ptaM in the cyclohexadienone B ring then produces chloroisosulochrin. PtaE is responsible for the oxidative coupling reactions of both benzophenones isosulochrin and chloroisosulochrin to RES-1214-1 and pestheic acid respectively, regardless of chlorination. This chain is Flavin-dependent halogenase ptaM, found in Pestalotiopsis fici (strain W106-1 / CGMCC3.15140).